A 68-amino-acid polypeptide reads, in one-letter code: DNA-directed RNA polymerase subunit omega (68 aa).

Belongs to the RNA polymerase subunit omega family. In terms of assembly, the RNAP catalytic core consists of 2 alpha, 1 beta, 1 beta' and 1 omega subunit. When a sigma factor is associated with the core the holoenzyme is formed, which can initiate transcription.

It catalyses the reaction RNA(n) + a ribonucleoside 5'-triphosphate = RNA(n+1) + diphosphate. Functionally, promotes RNA polymerase assembly. Latches the N- and C-terminal regions of the beta' subunit thereby facilitating its interaction with the beta and alpha subunits. In Persephonella marina (strain DSM 14350 / EX-H1), this protein is DNA-directed RNA polymerase subunit omega.